A 1325-amino-acid chain; its full sequence is SCAN domain-containing protein 3 (1325 aa).

An SCAN box domain is found at 52–134 (RQRFRQFCYQ…TLLEDLEREL (83 aa)). A coiled-coil region spans residues 246-275 (KAKYCQLIKEVKEAKAKAKKESVDYRRLAR). The Integrase catalytic domain maps to 366–526 (KSIKEVSSRC…TPCESAFSSE (161 aa)). Positions 542 to 568 (ASLHTENELDQADKELENTLRAQYEEN) form a coiled coil.

In terms of tissue distribution, weakly expressed in the lung (at protein level).

It is found in the nucleus. The sequence is that of SCAN domain-containing protein 3 from Homo sapiens (Human).